The primary structure comprises 300 residues: UDP-N-acetylenolpyruvoylglucosamine reductase (300 aa).

The FAD-binding PCMH-type domain occupies 30 to 194; sequence KVGGAADFFV…VGATFRLDPA (165 aa). Arg-174 is an active-site residue. Catalysis depends on Ser-223, which acts as the Proton donor. Residue Glu-293 is part of the active site.

Belongs to the MurB family. The cofactor is FAD.

It localises to the cytoplasm. It carries out the reaction UDP-N-acetyl-alpha-D-muramate + NADP(+) = UDP-N-acetyl-3-O-(1-carboxyvinyl)-alpha-D-glucosamine + NADPH + H(+). It functions in the pathway cell wall biogenesis; peptidoglycan biosynthesis. In terms of biological role, cell wall formation. The protein is UDP-N-acetylenolpyruvoylglucosamine reductase of Geobacter metallireducens (strain ATCC 53774 / DSM 7210 / GS-15).